We begin with the raw amino-acid sequence, 608 residues long: Glutamine--fructose-6-phosphate aminotransferase [isomerizing] (608 aa).

The active-site Nucleophile; for GATase activity is the Cys-2. The Glutamine amidotransferase type-2 domain occupies 2-218; that stretch reads CGICGIVGHQ…DGDWCELTPD (217 aa). SIS domains follow at residues 284-423 and 456-598; these read MPFD…ARGT and MAAV…VDQP. Lys-603 (for Fru-6P isomerization activity) is an active-site residue.

Homodimer.

Its subcellular location is the cytoplasm. The enzyme catalyses D-fructose 6-phosphate + L-glutamine = D-glucosamine 6-phosphate + L-glutamate. Functionally, catalyzes the first step in hexosamine metabolism, converting fructose-6P into glucosamine-6P using glutamine as a nitrogen source. This Gluconobacter oxydans (strain 621H) (Gluconobacter suboxydans) protein is Glutamine--fructose-6-phosphate aminotransferase [isomerizing].